Here is a 627-residue protein sequence, read N- to C-terminus: DEAD-box ATP-dependent RNA helicase 35A (627 aa).

Composition is skewed to low complexity over residues 1–15 (MAAATASSPATAAAA) and 52–61 (SSSAAEAASD). Disordered stretches follow at residues 1–23 (MAAATASSPATAAAANSDDEDNY) and 40–85 (LRRL…LEAS). Residues 62–72 (LPPPPPPPPNQ) are compositionally biased toward pro residues. The Q motif motif lies at 182–210 (RDFRDLRLPEPMLRKLREKGIVQPTPIQV). Positions 213 to 397 (LPVVLSGRDM…KSALVKPVIV (185 aa)) constitute a Helicase ATP-binding domain. An ATP-binding site is contributed by 226-233 (AFTGSGKT). Positions 345 to 348 (DEAD) match the DEAD box motif. The 161-residue stretch at 408–568 (DVIQEVEYVK…RIPPVLAELN (161 aa)) folds into the Helicase C-terminal domain. Residues 584 to 601 (KGCAYCGGLGHRVTDCPK) form a CCHC-type zinc finger.

It belongs to the DEAD box helicase family. DDX41 subfamily.

The enzyme catalyses ATP + H2O = ADP + phosphate + H(+). In Oryza sativa subsp. japonica (Rice), this protein is DEAD-box ATP-dependent RNA helicase 35A.